The sequence spans 178 residues: ATP synthase subunit delta (178 aa).

This sequence belongs to the ATPase delta chain family. In terms of assembly, F-type ATPases have 2 components, F(1) - the catalytic core - and F(0) - the membrane proton channel. F(1) has five subunits: alpha(3), beta(3), gamma(1), delta(1), epsilon(1). F(0) has three main subunits: a(1), b(2) and c(10-14). The alpha and beta chains form an alternating ring which encloses part of the gamma chain. F(1) is attached to F(0) by a central stalk formed by the gamma and epsilon chains, while a peripheral stalk is formed by the delta and b chains.

Its subcellular location is the cell membrane. F(1)F(0) ATP synthase produces ATP from ADP in the presence of a proton or sodium gradient. F-type ATPases consist of two structural domains, F(1) containing the extramembraneous catalytic core and F(0) containing the membrane proton channel, linked together by a central stalk and a peripheral stalk. During catalysis, ATP synthesis in the catalytic domain of F(1) is coupled via a rotary mechanism of the central stalk subunits to proton translocation. In terms of biological role, this protein is part of the stalk that links CF(0) to CF(1). It either transmits conformational changes from CF(0) to CF(1) or is implicated in proton conduction. The polypeptide is ATP synthase subunit delta (Buchnera aphidicola subsp. Baizongia pistaciae (strain Bp)).